A 94-amino-acid chain; its full sequence is Nucleoid-associated protein MYPE8070 (94 aa).

Belongs to the YbaB/EbfC family. Homodimer.

Its subcellular location is the cytoplasm. The protein resides in the nucleoid. Functionally, binds to DNA and alters its conformation. May be involved in regulation of gene expression, nucleoid organization and DNA protection. This Malacoplasma penetrans (strain HF-2) (Mycoplasma penetrans) protein is Nucleoid-associated protein MYPE8070.